We begin with the raw amino-acid sequence, 741 residues long: Protein O-mannosyl-transferase TMTC4 (741 aa).

Topologically, residues 1 to 10 (MVELDADLDH) are cytoplasmic. The chain crosses the membrane as a helical span at residues 11-31 (IVPSVLPPFWAKLVVGFVSLL). The Extracellular portion of the chain corresponds to 32 to 110 (CFARSYDGDF…FHPVGFHVVN (79 aa)). N-linked (GlcNAc...) asparagine glycosylation occurs at Asn-77. A helical transmembrane segment spans residues 111-131 (ILLHGSISILMLDVFSVLFGG). The Cytoplasmic portion of the chain corresponds to 132-146 (LQYTGKGQRVHLAPR). A run of 2 helical transmembrane segments spans residues 147-166 (ASLL…ECVA) and 167-185 (GVVG…LSFL). Residues 186 to 198 (GYCQAFKETGNKE) are Cytoplasmic-facing. A helical transmembrane segment spans residues 199-219 (GTHSSTFWVLLSIFLGAVAML). The Extracellular portion of the chain corresponds to 220-224 (CKEQG). Residues 225 to 245 (ITVLGLNAVFDILVIGKLDIL) form a helical membrane-spanning segment. The Cytoplasmic portion of the chain corresponds to 246-265 (AAVRKVLHKDKSQENAGMFK). The helical transmembrane segment at 266 to 286 (NGGLLFRIALLTIGGTSMLYI) threads the bilayer. Topologically, residues 287-354 (RWKIMGTGPP…PLIKSVGDWR (68 aa)) are extracellular. A helical membrane pass occupies residues 355–375 (VIALAALWLCLIGLIFQALCS). Residues 376–382 (EDSCKRR) lie on the Cytoplasmic side of the membrane. Residues 383 to 403 (ILTLGLGFLVIPFLPASNLFF) traverse the membrane as a helical segment. Residues 404 to 412 (RVGFVVAER) lie on the Extracellular side of the membrane. A helical membrane pass occupies residues 413–433 (VLYLPSAGYCVLLTFGFGALS). Residues 434 to 441 (RHTKKKKP) lie on the Cytoplasmic side of the membrane. A helical membrane pass occupies residues 442–462 (VAAIILGILLINALRCVIRSG). Over 463-741 (EWRSEEQLFR…KLEQTQKKDV (279 aa)) the chain is Extracellular. TPR repeat units follow at residues 482–515 (AKVH…NPKY), 516–549 (VHAM…QPDF), 550–583 (AAAW…RRKY), 584–617 (PDCY…KPEH), 618–651 (SLAW…IPND), 652–685 (HSLM…NPNV), and 686–719 (ASYH…DPVA). N-linked (GlcNAc...) asparagine glycosylation is present at Asn-497. Asn-609 carries an N-linked (GlcNAc...) asparagine glycan. The N-linked (GlcNAc...) asparagine glycan is linked to Asn-725.

This sequence belongs to the TMTC family.

It is found in the membrane. It localises to the endoplasmic reticulum. It catalyses the reaction a di-trans,poly-cis-dolichyl beta-D-mannosyl phosphate + L-seryl-[protein] = 3-O-(alpha-D-mannosyl)-L-seryl-[protein] + a di-trans,poly-cis-dolichyl phosphate + H(+). It carries out the reaction a di-trans,poly-cis-dolichyl beta-D-mannosyl phosphate + L-threonyl-[protein] = 3-O-(alpha-D-mannosyl)-L-threonyl-[protein] + a di-trans,poly-cis-dolichyl phosphate + H(+). The protein operates within protein modification; protein glycosylation. Transfers mannosyl residues to the hydroxyl group of serine or threonine residues. The 4 members of the TMTC family are O-mannosyl-transferases dedicated primarily to the cadherin superfamily, each member seems to have a distinct role in decorating the cadherin domains with O-linked mannose glycans at specific regions. Also acts as O-mannosyl-transferase on other proteins such as PDIA3. This is Protein O-mannosyl-transferase TMTC4 from Mus musculus (Mouse).